Here is a 564-residue protein sequence, read N- to C-terminus: Efflux pump hmp6 (564 aa).

Positions 1–25 (MEKHAEPEKSLGDKEFQEKELHEKP) are enriched in basic and acidic residues. The tract at residues 1–46 (MEKHAEPEKSLGDKEFQEKELHEKPAPAASEDISGDSSVNKEDGPD) is disordered. 8 helical membrane passes run 58-78 (LAVV…DTTI), 96-118 (VGWY…GKLY), 125-145 (IVFT…GVAP), 156-176 (IAGL…IHSV), 186-206 (GMIV…GGAF), 214-234 (WCFY…LFFF), 259-279 (FGTF…QMGG), and 289-309 (IIVL…VQFF). 2 N-linked (GlcNAc...) asparagine glycosylation sites follow: Asn-312 and Asn-322. Transmembrane regions (helical) follow at residues 330–350 (IYMF…PIWF), 361–383 (SGIR…GALV), 395–415 (ASVV…VDAS), and 452–472 (IGTA…VSAA).

It belongs to the major facilitator superfamily. TCR/Tet family.

It localises to the cell membrane. Functionally, efflux pump that might be required for efficient secretion of hypothemycin or other secondary metabolies produced by the hypothemycin gene cluster. The chain is Efflux pump hmp6 from Hypomyces subiculosus (Nectria subiculosa).